Here is a 440-residue protein sequence, read N- to C-terminus: Chromosome partition protein MukF (440 aa).

Residues 208–236 (LSETSGTLRELQDTLEAAGDKLQANLLRI) are leucine-zipper.

Belongs to the MukF family. In terms of assembly, interacts, and probably forms a ternary complex, with MukE and MukB via its C-terminal region. The complex formation is stimulated by calcium or magnesium. It is required for an interaction between MukE and MukB.

It is found in the cytoplasm. Its subcellular location is the nucleoid. In terms of biological role, involved in chromosome condensation, segregation and cell cycle progression. May participate in facilitating chromosome segregation by condensation DNA from both sides of a centrally located replisome during cell division. Not required for mini-F plasmid partitioning. Probably acts via its interaction with MukB and MukE. Overexpression results in anucleate cells. It has a calcium binding activity. This chain is Chromosome partition protein MukF, found in Citrobacter koseri (strain ATCC BAA-895 / CDC 4225-83 / SGSC4696).